The primary structure comprises 326 residues: Regulation of nuclear pre-mRNA domain-containing protein 1B (326 aa).

Ser2 carries the N-acetylserine modification. One can recognise a CID domain in the interval 2-133 (SSFSESALEK…QLKLSMEDSK (132 aa)). The segment covering 128-144 (SMEDSKSPPPKAAEEKK) has biased composition (basic and acidic residues). A disordered region spans residues 128 to 148 (SMEDSKSPPPKAAEEKKSLKR). Phosphoserine occurs at positions 132 and 134. A Phosphotyrosine modification is found at Tyr161. Ser166 and Ser299 each carry phosphoserine.

The protein belongs to the UPF0400 (RTT103) family. As to quaternary structure, homodimer. May form a heterodimer with RPRD1A. Associates with RPAP2. Associates with the RNA polymerase II complex. As to expression, widely expressed in the adult with highest levels in liver, colon, prostate and uterus and lowest levels in heart and kidney. Not detected in rectum.

It localises to the nucleus. Interacts with phosphorylated C-terminal heptapeptide repeat domain (CTD) of the largest RNA polymerase II subunit POLR2A, and participates in dephosphorylation of the CTD by RPAP2. Transcriptional regulator which enhances expression of CCND1. Promotes binding of RNA polymerase II to the CCDN1 promoter and to the termination region before the poly-A site but decreases its binding after the poly-A site. Prevents RNA polymerase II from reading through the 3' end termination site and may allow it to be recruited back to the promoter through promotion of the formation of a chromatin loop. Also enhances the transcription of a number of other cell cycle-related genes including CDK2, CDK4, CDK6 and cyclin-E but not CDKN1A, CDKN1B or cyclin-A. Promotes cell proliferation. This chain is Regulation of nuclear pre-mRNA domain-containing protein 1B (Rprd1b), found in Mus musculus (Mouse).